A 660-amino-acid polypeptide reads, in one-letter code: DNA ligase (660 aa).

NAD(+)-binding positions include 33–37 (DFVYD), 82–83 (SL), and Glu110. The active-site N6-AMP-lysine intermediate is Lys112. Positions 133, 167, 281, and 305 each coordinate NAD(+). Residues Cys396, Cys399, Cys412, and Cys417 each contribute to the Zn(2+) site. Residues 583–660 (GENKLLAGKK…SFEDIKSYLD (78 aa)) form the BRCT domain.

It belongs to the NAD-dependent DNA ligase family. LigA subfamily. Mg(2+) serves as cofactor. It depends on Mn(2+) as a cofactor.

It catalyses the reaction NAD(+) + (deoxyribonucleotide)n-3'-hydroxyl + 5'-phospho-(deoxyribonucleotide)m = (deoxyribonucleotide)n+m + AMP + beta-nicotinamide D-nucleotide.. DNA ligase that catalyzes the formation of phosphodiester linkages between 5'-phosphoryl and 3'-hydroxyl groups in double-stranded DNA using NAD as a coenzyme and as the energy source for the reaction. It is essential for DNA replication and repair of damaged DNA. The sequence is that of DNA ligase from Borreliella burgdorferi (strain ATCC 35210 / DSM 4680 / CIP 102532 / B31) (Borrelia burgdorferi).